The chain runs to 449 residues: Required for meiotic nuclear division protein 1 homolog (449 aa).

A mitochondrion-targeting transit peptide spans 1-16 (MPATLLRAVAGSHRVL).

Belongs to the RMD1/sif2 family. Homooligomer.

It is found in the mitochondrion. Its function is as follows. Required for mitochondrial translation, possibly by coordinating the assembly or maintenance of the mitochondrial ribosome. This is Required for meiotic nuclear division protein 1 homolog (RMND1) from Pongo abelii (Sumatran orangutan).